The following is a 402-amino-acid chain: Propionate kinase (402 aa).

ATP is bound by residues asparagine 11 and lysine 18. Asparagine 11 serves as a coordination point for Mg(2+). Position 86 (arginine 86) interacts with substrate. Catalysis depends on aspartate 143, which acts as the Proton donor/acceptor. ATP contacts are provided by residues histidine 175, 203–207, 278–280, and 326–330; these read HLGNG, DLR, and GIGEN.

This sequence belongs to the acetokinase family. TdcD subfamily. Homodimer. Mg(2+) is required as a cofactor.

The catalysed reaction is propanoate + ATP = propanoyl phosphate + ADP. The protein operates within amino-acid degradation; L-threonine degradation via propanoate pathway; propanoate from L-threonine: step 4/4. Functionally, catalyzes the conversion of propionyl phosphate and ADP to propionate and ATP. The chain is Propionate kinase from Salmonella agona (strain SL483).